The following is a 59-amino-acid chain: Potassium channel toxin alpha-KTx 16.2 (59 aa).

Positions 1–22 are cleaved as a signal peptide; the sequence is MKIFSILLVALIICSISICTEA. 3 disulfides stabilise this stretch: C30/C51, C36/C56, and C40/C58.

Belongs to the short scorpion toxin superfamily. Potassium channel inhibitor family. Alpha-KTx 16 subfamily. As to expression, expressed by the venom gland.

The protein resides in the secreted. Its function is as follows. Alpha-KTx 16.2: inhibits large conductance calcium-activated potassium channels (KCa1.1/Slo-beta4 KCNMA1/KCNMB4). It appears to block channel activity by a simple bimolecular inhibition process. Shows a fast association rate and a slow dissociation rate of binding on rat brain synaptosome. Significantly inhibits voltage-dependent sodium current and voltage-dependent delayed rectifier potassium currents. Functionally, significantly inhibits voltage-dependent sodium current (Nav) and voltage-dependent delayed rectifier potassium current. In Olivierus martensii (Manchurian scorpion), this protein is Potassium channel toxin alpha-KTx 16.2.